The chain runs to 442 residues: Phosphatidylserine synthase 2 (442 aa).

The Cytoplasmic portion of the chain corresponds to 1–40; that stretch reads MRRGERRGPAGPLGDGPALGLRRSTESEVYDDGTNTFFWR. Residues 41–61 traverse the membrane as a helical segment; it reads AHTLTVLFILTCALGYVTLLE. At 62 to 74 the chain is on the lumenal side; sequence ETPQDTAYNTKRG. A helical transmembrane segment spans residues 75–95; that stretch reads IVASILVFLCFGVTQAKDGPF. Residues 96 to 104 are Cytoplasmic-facing; sequence SRPHPAYWR. A helical membrane pass occupies residues 105 to 125; the sequence is FWLCVSVVYELFLIFILFQTV. Over 126–291 the chain is Lumenal; sequence QDGRQFMKYI…EWKPASSLRR (166 aa). N-linked (GlcNAc...) asparagine glycosylation is found at Asn-159 and Asn-215. Residues 292 to 312 traverse the membrane as a helical segment; the sequence is WLAVCGIIFVFLLAELNTFYL. A topological domain (cytoplasmic) is located at residue Lys-313. Residues 314–334 traverse the membrane as a helical segment; sequence FVLWMPPEHYLVLLRLVFFVN. Topologically, residues 335–354 are lumenal; that stretch reads VGGVAMREIYDFMDDPKFHK. Residues 355–375 form a helical membrane-spanning segment; sequence KLGQQAWLVAAITATEFLIVV. Residues 376–381 lie on the Cytoplasmic side of the membrane; sequence KYDPYT. Residues 382 to 402 traverse the membrane as a helical segment; sequence LTLSLPFYITQCWILGIILVL. The Lumenal portion of the chain corresponds to 403-442; sequence TWTAWRFFIRDITLRYKEIRRQKQEHKYEKDKCLSNGDGH.

The protein belongs to the phosphatidyl serine synthase family.

Its subcellular location is the endoplasmic reticulum membrane. It carries out the reaction a 1,2-diacyl-sn-glycero-3-phosphoethanolamine + L-serine = a 1,2-diacyl-sn-glycero-3-phospho-L-serine + ethanolamine. The enzyme catalyses 1-hexadecanoyl-2-(9Z-octadecenoyl)-sn-glycero-3-phosphoethanolamine + L-serine = 1-hexadecanoyl-2-(9Z-octadecenoyl)-sn-glycero-3-phospho-L-serine + ethanolamine. The catalysed reaction is 1-hexadecanoyl-2-(4Z,7Z,10Z,13Z,16Z,19Z-docosahexaenoyl)-sn-glycero-3-phosphoethanolamine + L-serine = 1-hexadecanoyl-2-(4Z,7Z,10Z,13Z,16Z,19Z-docosahexaenoyl)-sn-glycero-3-phosphoserine + ethanolamine. It catalyses the reaction 1-octadecanoyl-2-(5Z,8Z,11Z,14Z)-eicosatetraenoyl-sn-glycero-3-phosphoethanolamine + L-serine = 1-octadecanoyl-2-(5Z,8Z,11Z,14Z)-eicosatetraenoyl-sn-glycero-3-phosphoserine + ethanolamine. It carries out the reaction 1-octadecanoyl-2-(4Z,7Z,10Z,13Z,16Z,19Z-docosahexaenoyl)-sn-glycero-3-phosphoethanolamine + L-serine = 1-octadecanoyl-2-(4Z,7Z,10Z,13Z,16Z,19Z-docosahexaenoyl)-sn-glycero-3-phosphoserine + ethanolamine. The enzyme catalyses 1-(1Z-octadecenyl)-2-(4Z,7Z,10Z,13Z,16Z,19Z-docosahexaenoyl)-sn-glycero-3-phosphoethanolamine + L-serine = 1-(1Z-octadecenyl)-2-(4Z,7Z,10Z,13Z,16Z,19Z-docosahexaenoyl)-sn-glycero-3-phospho-L-serine + ethanolamine. The catalysed reaction is 1-octadecanoyl-2-(9Z-octadecenoyl)-sn-glycero-3-phosphoethanolamine + L-serine = 1-octadecanoyl-2-(9Z-octadecenoyl)-sn-glycero-3-phospho-L-serine + ethanolamine. It catalyses the reaction 1-(1Z-octadecenyl)-2-(9Z-octadecenoyl)-sn-glycero-3-phosphoethanolamine + L-serine = 1-(1Z-octadecenyl)-2-(9Z-octadecenoyl)-sn-glycero-3-phospho-L-serine + ethanolamine. It carries out the reaction 1-(1Z-octadecenyl)-2-(5Z,8Z,11Z,14Z- eicosatetraenoyl)-sn-glycero-3-phosphoethanolamine + L-serine = 1-(1Z-octadecenyl)-2-(5Z,8Z,11Z,14Z-eicosatetraenoyl)-sn-glycero-3-phospho-L-serine + ethanolamine. Its pathway is phospholipid metabolism; phosphatidylserine biosynthesis. In terms of biological role, catalyzes a base-exchange reaction in which the polar head group of phosphatidylethanolamine (PE) or phosphatidylcholine (PC) is replaced by L-serine. Catalyzes the conversion of phosphatatidylethanolamine and does not act on phosphatidylcholine. Can utilize both phosphatidylethanolamine (PE) plasmalogen and diacyl PE as substrate and the latter is six times better utilized, indicating the importance of an ester linkage at the sn-1 position. Although it shows no sn-1 fatty acyl preference, exhibits significant preference towards docosahexaenoic acid (22:6n-3) compared with 18:1 or 20:4 at the sn-2 position. The sequence is that of Phosphatidylserine synthase 2 (PTDSS1) from Gallus gallus (Chicken).